The primary structure comprises 611 residues: O-fucosyltransferase 8 (611 aa).

Residues 1–29 form a disordered region; that stretch reads MGKQGSPRSPRPETIDKEEKFGRRSLDSL. The segment covering 10–26 has biased composition (basic and acidic residues); sequence PRPETIDKEEKFGRRSL. Residues 78-98 form a helical; Signal-anchor for type II membrane protein membrane-spanning segment; the sequence is IVLMISVTGFIFCMDSIMVSI. N-linked (GlcNAc...) asparagine glycans are attached at residues Asn-115, Asn-216, and Asn-270. Substrate is bound at residue 386–388; the sequence is HLR. Asn-506 carries an N-linked (GlcNAc...) asparagine glycan.

Belongs to the glycosyltransferase GT106 family.

It localises to the membrane. The protein operates within glycan metabolism. This is O-fucosyltransferase 8 from Arabidopsis thaliana (Mouse-ear cress).